Consider the following 568-residue polypeptide: MLRLARKGLQTAVVRSYAKDVKFGAEGRQAMLVGVNLLADAVSVTMGPKGRNVIIEQSWGSPKITKDGVTVAKSIDLKDKYQNLGAKLIQDVANKANEEAGDGTTCATVLARAIAKEGFESIRQGGNAVEIRRGVMNAVEVVVAELKKISKKVTTPEEIAQVATISANGDTVVGNLISDAMKKVGTTGVITVKDGKTLNDELELIEGMKFDRGYISPYFITSAKGAKVEYEKALVLLSEKKISQVQDIVPALELANKLRRPLVIIAEDVDGEALTTLVLNRLKVGLQVVAIKAPGFGDNRKNTLKDMGIATGATIFGDDSNLIKIEDITANDLGEVDEVTITKDDTLLLRGRGDQTEIEKRIEHITDEIEQSTSDYEKEKLNERLAKLSKGVAVLKIGGGSEVEVGEKKDRVTDALCATRAAVEEGIVPGGGVALLRSLTALKNYKAANEDQQIGVNIVKKALTQPIATIVKNAGLEPSSIIDEVTGNSNTSYGYDALNGKFVDMFEAGIIDPTKVVRTALQDASGVASLLATTECVVTEIPKEEAVGGPAGGMGGMGGMGGMGGMGF.

Belongs to the chaperonin (HSP60) family.

It is found in the mitochondrion matrix. In terms of biological role, implicated in mitochondrial protein import and macromolecular assembly. May facilitate the correct folding of imported proteins. May also prevent misfolding and promote the refolding and proper assembly of unfolded polypeptides generated under stress conditions in the mitochondrial matrix. The chain is Chaperonin homolog Hsp-60, mitochondrial (hsp-60) from Caenorhabditis elegans.